Reading from the N-terminus, the 328-residue chain is MIRFAIIGTNWITDRFLESAADIEDFQLTAVYSRSAERAGEFAAKHNAAHAFSDLQEMAASDCFDAVYIASPNALHKEQAVLFMNHGKHVLCEKPFASNTKETEEMISAAKANGVVLMEAMKTTFLPNFKELKKHLHKIGTVRRFTASYCQYSSRYDAFRSGTVLNAFQPELSNGSLMDIGVYCIYPAVVLFGAPKDVKANGYALSSGVDGEGTVILSYDGFEAVLMHSKISTSYAPAEIQGEDGTIVIDTIHRPERVEIRYRDGRLENIAIPDPKPAMFYEAEEFVTLIKENKLESEENTFERSLTTAKIMEEARKQMGIVYPADQA.

This sequence belongs to the Gfo/Idh/MocA family.

It carries out the reaction scyllo-inositol + NADP(+) = scyllo-inosose + NADPH + H(+). Catalyzes the NADPH-dependent reduction of scyllo-inosose (SIS) to scyllo-inositol (SI) in vitro, but is unable to dehydrogenate scyllo-inositol and myo-inositol. Is less efficient than the functional paralog IolW. Under physiological conditions, may primarily function as an NADPH-dependent oxidoreductase that reduces carbonyl group(s) in its substrates. Cannot use NADH instead of NADPH. This Bacillus subtilis (strain 168) protein is scyllo-inositol 2-dehydrogenase (NADP(+)) IolU.